We begin with the raw amino-acid sequence, 861 residues long: E3 ubiquitin-protein ligase HECTD3 (861 aa).

Alanine 2 is modified (N-acetylalanine). Position 12 is a phosphoserine (serine 12). Residues 219–397 (DEDLIHFLYD…TSLVRYPRLE (179 aa)) form the DOC domain. One can recognise an HECT domain in the interval 512-857 (YEKPLDYRWP…NCVAIDTDMS (346 aa)). Catalysis depends on cysteine 823, which acts as the Glycyl thioester intermediate.

Interacts with TRIOBP. Interacts with STX8.

Its subcellular location is the cytoplasm. The protein localises to the perinuclear region. It carries out the reaction S-ubiquitinyl-[E2 ubiquitin-conjugating enzyme]-L-cysteine + [acceptor protein]-L-lysine = [E2 ubiquitin-conjugating enzyme]-L-cysteine + N(6)-ubiquitinyl-[acceptor protein]-L-lysine.. It participates in protein modification; protein ubiquitination. In terms of biological role, E3 ubiquitin ligases accepts ubiquitin from an E2 ubiquitin-conjugating enzyme in the form of a thioester and then directly transfers the ubiquitin to targeted substrates. Mediates ubiquitination of TRIOBP and its subsequent proteasomal degradation, thus facilitating cell cycle progression by regulating the turn-over of TRIOBP. Mediates also ubiquitination of STX8. This Homo sapiens (Human) protein is E3 ubiquitin-protein ligase HECTD3 (HECTD3).